Here is a 431-residue protein sequence, read N- to C-terminus: Homeobox protein knotted-1-like 3 (431 aa).

Residues 15–47 (NHFTDQHQPPPPQPPPPPPQQQQHFQEAPPPNW) form a disordered region. Residues 22-34 (QPPPPQPPPPPPQ) show a composition bias toward pro residues. The region spanning 322-342 (ELKHELKQGYKEKIVDIREEI) is the ELK domain. The segment at residues 343 to 406 (LRKRRAGKLP…NQRKRNWHSN (64 aa)) is a DNA-binding region (homeobox; TALE-type). The tract at residues 402 to 431 (NWHSNPSSSTVLKNKRKSNAGDNSGRERFA) is disordered. Residues 404–413 (HSNPSSSTVL) show a composition bias toward polar residues.

It belongs to the TALE/KNOX homeobox family. May form heterodimeric complex with the TALE/BELL proteins. Interacts with OFP1, OFP2, OFP4, OFP12 and OFP14. Interacts with KNATM-B.

Its subcellular location is the nucleus. This is Homeobox protein knotted-1-like 3 (KNAT3) from Arabidopsis thaliana (Mouse-ear cress).